A 292-amino-acid polypeptide reads, in one-letter code: Ribosomal RNA small subunit methyltransferase A (292 aa).

Asn28, Leu30, Gly55, Glu76, Asp101, and Asn126 together coordinate S-adenosyl-L-methionine.

The protein belongs to the class I-like SAM-binding methyltransferase superfamily. rRNA adenine N(6)-methyltransferase family. RsmA subfamily.

The protein localises to the cytoplasm. It catalyses the reaction adenosine(1518)/adenosine(1519) in 16S rRNA + 4 S-adenosyl-L-methionine = N(6)-dimethyladenosine(1518)/N(6)-dimethyladenosine(1519) in 16S rRNA + 4 S-adenosyl-L-homocysteine + 4 H(+). Functionally, specifically dimethylates two adjacent adenosines (A1518 and A1519) in the loop of a conserved hairpin near the 3'-end of 16S rRNA in the 30S particle. May play a critical role in biogenesis of 30S subunits. This Bacillus thuringiensis (strain Al Hakam) protein is Ribosomal RNA small subunit methyltransferase A.